The chain runs to 398 residues: Cytochrome b (398 aa).

The chain crosses the membrane as a helical span at residues 45–65; that stretch reads LGSIAGIALVIQIITGVILAM. Heme b is bound by residues histidine 95 and histidine 109. Helical transmembrane passes span 96-116, 129-149, 164-184, 192-212, 245-265, 277-297, 304-324, 339-359, and 366-386; these read AVGASMFFAAVYLHIARGLYY, IGIIIFLTMMATAFMGYVLPW, FSAIPLIGEFIVTWLWGGFSV, FFSLHYLLPFIIVALVMLHLV, FVGFGVYFIIFAYFIFYEPNY, PLVTPAHIVPEWYFLPFYAIL, LGGVLLMFGSIFVLFLLPWLD, MAFWIFMADCLLLGYLGGQPA, and ISRFAACYYFFHVLVALPLIG. 2 residues coordinate heme b: histidine 196 and histidine 210.

It belongs to the cytochrome b family. As to quaternary structure, the main subunits of complex b-c1 are: cytochrome b, cytochrome c1 and the Rieske protein. It depends on heme b as a cofactor.

It localises to the cell membrane. Its function is as follows. Component of the ubiquinol-cytochrome c reductase complex (complex III or cytochrome b-c1 complex), which is a respiratory chain that generates an electrochemical potential coupled to ATP synthesis. This is Cytochrome b (petB) from Rickettsia conorii (strain ATCC VR-613 / Malish 7).